The following is a 446-amino-acid chain: 5-hydroxytryptamine receptor 7 (446 aa).

At 1–84 (MMGVNSSGRP…INYGRAEKVV (84 aa)) the chain is on the extracellular side. 2 N-linked (GlcNAc...) asparagine glycosylation sites follow: asparagine 5 and asparagine 67. The helical transmembrane segment at 85–109 (IGSILTLITLLTIAGNCLVVISVCF) threads the bilayer. At 110 to 119 (VKKLRQPSNY) the chain is on the cytoplasmic side. Residues 120–141 (LIVSLALADLSVAVAVIPFVSV) form a helical membrane-spanning segment. Over 142–153 (TDLIGGKWIFGH) the chain is Extracellular. A helical transmembrane segment spans residues 154-179 (FFCNVFIAMDVMCCTASIMTLCVISI). Cysteine 156 and cysteine 232 are joined by a disulfide. Aspartate 163 is a serotonin binding site. The Cytoplasmic portion of the chain corresponds to 180–199 (DRYLGITRPLTYPVRQNGKC). Residues 200 to 220 (MPKMILSVWLLSASITLPPLF) traverse the membrane as a helical segment. The Extracellular portion of the chain corresponds to 221-238 (GWAQNVNDDKVCLISQDF). The helical transmembrane segment at 239–261 (GYTIYSTAVAFYIPMSVMLFMYY) threads the bilayer. At 262–327 (RIYKAARKSA…SIFKREQKAA (66 aa)) the chain is on the cytoplasmic side. Residues 328–353 (TTLGIIVGAFTVCWLPFFLLSTARPF) traverse the membrane as a helical segment. Over 354–364 (ICGTACSCIPL) the chain is Extracellular. The helical transmembrane segment at 365–388 (WVERTCLWLGYANSLINPFIYAFF) threads the bilayer. The Cytoplasmic segment spans residues 389-446 (NRDLRTTYRSLLQCQYRNINRKLSAAGMHEALKLAERPERPECVLQNSDYCRKKGHDS). Cysteine 402 carries the S-palmitoyl cysteine lipid modification.

The protein belongs to the G-protein coupled receptor 1 family.

It localises to the cell membrane. G-protein coupled receptor for 5-hydroxytryptamine (serotonin), a biogenic hormone that functions as a neurotransmitter, a hormone and a mitogen. Ligand binding causes a conformation change that triggers signaling via guanine nucleotide-binding proteins (G proteins) and modulates the activity of downstream effectors. HTR7 is coupled to G(s) G alpha proteins and mediates activation of adenylate cyclase activity. This Cavia porcellus (Guinea pig) protein is 5-hydroxytryptamine receptor 7 (HTR7).